A 343-amino-acid polypeptide reads, in one-letter code: Serpentine receptor class alpha-11 (343 aa).

The Extracellular portion of the chain corresponds to 1 to 24; that stretch reads MSSPDTPVCASPQQMEMYNSHFYT. A helical transmembrane segment spans residues 25-45; it reads CALFFNLLIAFTSMTLIIMAI. Topologically, residues 46–60 are cytoplasmic; that stretch reads RKLLTESIINTSTRM. The helical transmembrane segment at 61–81 threads the bilayer; it reads FLIVGLLCCSLHQTAYIVLRV. At 82–106 the chain is on the extracellular side; that stretch reads QVIFQILFKLDQPCKLYYKAYDCKY. The helical transmembrane segment at 107 to 127 threads the bilayer; that stretch reads VTFSLVAGNTGMIFIQSAMTI. Residues 128–146 lie on the Cytoplasmic side of the membrane; the sequence is DRILTTVFTNLWPKLKYWP. A helical membrane pass occupies residues 147 to 167; that stretch reads GVILSSFMIGCNFTNVQFIFW. The Extracellular portion of the chain corresponds to 168–192; it reads NDPLTDYVPTCGQFPPKSVGRFQKF. A helical transmembrane segment spans residues 193–213; that stretch reads LEIALYMSLAHMVINVIILYI. Topologically, residues 214–247 are cytoplasmic; sequence NVVQDRRQRLVSTHDQSQSFDVNQRFQSRVALKS. A helical membrane pass occupies residues 248–268; the sequence is TQAIFFLSMSQFLSCFLYTIF. The Extracellular portion of the chain corresponds to 269–291; it reads TKLYLTLQPDMTPLQSGLTLALT. The helical transmembrane segment at 292-312 threads the bilayer; it reads YTTPYACIAIPSLIMVTLTFI. At 313–343 the chain is on the cytoplasmic side; it reads RNQRHRSINALRSQTETGDQYMQKIKKIWDK.

The protein belongs to the nematode receptor-like protein sra family.

Its subcellular location is the membrane. Its function is as follows. A G protein-coupled receptor required for olfactory imprinting a requisite in ordorant response such as benzaldehyde and isoamylalcohol. This Caenorhabditis briggsae protein is Serpentine receptor class alpha-11.